The primary structure comprises 146 residues: MSETFTKGMARNIYFGGSVFFFLVFLGLTYHTEQTFPERTNESEMTEAVVRGKEVWENNNCIGCHSLLGEGAYFAPELGNVFVRRGGEETFKPFLHAWMKAQPLGAPGRRAMPQFNLSEQQVDDMAEFLKWTSKIDTNDWPPNKEG.

Residues Ile13–Thr29 form a helical; Signal-anchor membrane-spanning segment. Positions 61, 64, and 65 each coordinate heme c.

In terms of assembly, heterodimer of cytochromes b (large subunit) and c (small subunit).

Its subcellular location is the cell membrane. Functionally, component of the anaerobic respiratory chain that transforms nitrate to dinitrogen (denitrification). The chain is Nitric oxide reductase subunit C (norC) from Stutzerimonas stutzeri (Pseudomonas stutzeri).